A 197-amino-acid polypeptide reads, in one-letter code: Imidazoleglycerol-phosphate dehydratase (197 aa).

It belongs to the imidazoleglycerol-phosphate dehydratase family.

The protein resides in the cytoplasm. The catalysed reaction is D-erythro-1-(imidazol-4-yl)glycerol 3-phosphate = 3-(imidazol-4-yl)-2-oxopropyl phosphate + H2O. It participates in amino-acid biosynthesis; L-histidine biosynthesis; L-histidine from 5-phospho-alpha-D-ribose 1-diphosphate: step 6/9. This chain is Imidazoleglycerol-phosphate dehydratase, found in Pseudomonas syringae pv. syringae (strain B728a).